We begin with the raw amino-acid sequence, 477 residues long: Proton extrusion protein PxcA (477 aa).

The next 3 membrane-spanning stretches (helical) occupy residues 239-259 (FILL…ITFV), 354-374 (GIKN…IIST), and 437-457 (FNFL…KYWI).

It belongs to the CemA family.

The protein localises to the cell inner membrane. In terms of biological role, required for H(+) efflux immediately after light irradiation to form a rapid H(+) concentration gradient across the thylakoid membranes. Together with PxcL, contributes to transient H(+) uptake following dark to light transition. This is Proton extrusion protein PxcA from Trichodesmium erythraeum (strain IMS101).